Reading from the N-terminus, the 158-residue chain is MAKVESFTLDHTKVKAPYVRLITVEEGPKGDKISNYDLRLVQPNENAIPTAGLHTIEHLLAGLLRDRLGGVIDCSPFGCRTGFHLITWGEHSTTEVAKALKSSLEEIAYKTKWEDVQGTTIESCGNYRDHSLFSAKEWSKKILDEGISDKPFERHVVD.

Residues His54, His58, and Cys124 each coordinate Fe cation.

Belongs to the LuxS family. As to quaternary structure, homodimer. Requires Fe cation as cofactor.

It carries out the reaction S-(5-deoxy-D-ribos-5-yl)-L-homocysteine = (S)-4,5-dihydroxypentane-2,3-dione + L-homocysteine. In terms of biological role, involved in the synthesis of autoinducer 2 (AI-2) which is secreted by bacteria and is used to communicate both the cell density and the metabolic potential of the environment. The regulation of gene expression in response to changes in cell density is called quorum sensing. Catalyzes the transformation of S-ribosylhomocysteine (RHC) to homocysteine (HC) and 4,5-dihydroxy-2,3-pentadione (DPD). In Limosilactobacillus reuteri (strain DSM 20016) (Lactobacillus reuteri), this protein is S-ribosylhomocysteine lyase.